We begin with the raw amino-acid sequence, 148 residues long: Transcriptional regulator MraZ (148 aa).

2 consecutive SpoVT-AbrB domains span residues 5–53 (ETAI…AEKE) and 82–125 (SAVL…SEQA).

The protein belongs to the MraZ family. In terms of assembly, forms oligomers.

Its subcellular location is the cytoplasm. The protein resides in the nucleoid. This Xanthomonas axonopodis pv. citri (strain 306) protein is Transcriptional regulator MraZ.